Reading from the N-terminus, the 171-residue chain is Shikimate kinase (171 aa).

14–19 is an ATP binding site; sequence GAGKST. Residue serine 18 coordinates Mg(2+). Positions 36, 60, and 82 each coordinate substrate. An ATP-binding site is contributed by arginine 120. Arginine 139 contributes to the substrate binding site. Glutamine 156 is a binding site for ATP.

This sequence belongs to the shikimate kinase family. As to quaternary structure, monomer. Requires Mg(2+) as cofactor.

The protein resides in the cytoplasm. It catalyses the reaction shikimate + ATP = 3-phosphoshikimate + ADP + H(+). It functions in the pathway metabolic intermediate biosynthesis; chorismate biosynthesis; chorismate from D-erythrose 4-phosphate and phosphoenolpyruvate: step 5/7. Functionally, catalyzes the specific phosphorylation of the 3-hydroxyl group of shikimic acid using ATP as a cosubstrate. The chain is Shikimate kinase from Shewanella loihica (strain ATCC BAA-1088 / PV-4).